The sequence spans 169 residues: S-ribosylhomocysteine lyase (169 aa).

Residues His-54, His-58, and Cys-129 each coordinate Fe cation.

It belongs to the LuxS family. In terms of assembly, homodimer. Fe cation serves as cofactor.

It carries out the reaction S-(5-deoxy-D-ribos-5-yl)-L-homocysteine = (S)-4,5-dihydroxypentane-2,3-dione + L-homocysteine. Functionally, involved in the synthesis of autoinducer 2 (AI-2) which is secreted by bacteria and is used to communicate both the cell density and the metabolic potential of the environment. The regulation of gene expression in response to changes in cell density is called quorum sensing. Catalyzes the transformation of S-ribosylhomocysteine (RHC) to homocysteine (HC) and 4,5-dihydroxy-2,3-pentadione (DPD). The protein is S-ribosylhomocysteine lyase of Haemophilus ducreyi (strain 35000HP / ATCC 700724).